The chain runs to 220 residues: Regulatory protein VanRB (220 aa).

Residues 4–117 form the Response regulatory domain; that stretch reads RILLVEDDDH…ILLKRVEALL (114 aa). Asp-53 bears the 4-aspartylphosphate mark. The segment at residues 124 to 218 is a DNA-binding region (ompR/PhoB-type); sequence AKEFRVGRLT…IRGVGYRLEE (95 aa).

May be phosphorylated by VanSB. May also be dephosphorylated by VanSB.

It localises to the cytoplasm. Functionally, member of the two-component regulatory system VanSB/VanRB. Activates the transcription of vanSB, vanYB and vanW in response to vancomycin which results in vancomycin resistance. In Enterococcus faecalis (strain ATCC 700802 / V583), this protein is Regulatory protein VanRB (vanRB).